A 521-amino-acid chain; its full sequence is Bifunctional purine biosynthesis protein PurH (521 aa).

Positions 1-145 constitute an MGS-like domain; it reads MIKQALISVS…KNHRDVTVVV (145 aa).

It belongs to the PurH family.

The enzyme catalyses (6R)-10-formyltetrahydrofolate + 5-amino-1-(5-phospho-beta-D-ribosyl)imidazole-4-carboxamide = 5-formamido-1-(5-phospho-D-ribosyl)imidazole-4-carboxamide + (6S)-5,6,7,8-tetrahydrofolate. The catalysed reaction is IMP + H2O = 5-formamido-1-(5-phospho-D-ribosyl)imidazole-4-carboxamide. It participates in purine metabolism; IMP biosynthesis via de novo pathway; 5-formamido-1-(5-phospho-D-ribosyl)imidazole-4-carboxamide from 5-amino-1-(5-phospho-D-ribosyl)imidazole-4-carboxamide (10-formyl THF route): step 1/1. It functions in the pathway purine metabolism; IMP biosynthesis via de novo pathway; IMP from 5-formamido-1-(5-phospho-D-ribosyl)imidazole-4-carboxamide: step 1/1. The sequence is that of Bifunctional purine biosynthesis protein PurH from Burkholderia lata (strain ATCC 17760 / DSM 23089 / LMG 22485 / NCIMB 9086 / R18194 / 383).